The primary structure comprises 294 residues: tRNA dimethylallyltransferase (294 aa).

9–16 (GPTASGKS) provides a ligand contact to ATP. 11–16 (TASGKS) lines the substrate pocket. The segment at 155–159 (QRVIR) is interaction with substrate tRNA.

The protein belongs to the IPP transferase family. As to quaternary structure, monomer. Mg(2+) serves as cofactor.

It catalyses the reaction adenosine(37) in tRNA + dimethylallyl diphosphate = N(6)-dimethylallyladenosine(37) in tRNA + diphosphate. In terms of biological role, catalyzes the transfer of a dimethylallyl group onto the adenine at position 37 in tRNAs that read codons beginning with uridine, leading to the formation of N6-(dimethylallyl)adenosine (i(6)A). This chain is tRNA dimethylallyltransferase, found in Leuconostoc citreum (strain KM20).